Consider the following 343-residue polypeptide: Arginine N-succinyltransferase (343 aa).

Leucine 125 is a binding site for succinyl-CoA. The active-site Proton donor is histidine 229.

This sequence belongs to the arginine N-succinyltransferase family.

It carries out the reaction succinyl-CoA + L-arginine = N(2)-succinyl-L-arginine + CoA + H(+). The protein operates within amino-acid degradation; L-arginine degradation via AST pathway; L-glutamate and succinate from L-arginine: step 1/5. Functionally, catalyzes the transfer of succinyl-CoA to arginine to produce N(2)-succinylarginine. The sequence is that of Arginine N-succinyltransferase from Photorhabdus laumondii subsp. laumondii (strain DSM 15139 / CIP 105565 / TT01) (Photorhabdus luminescens subsp. laumondii).